Reading from the N-terminus, the 101-residue chain is Trp operon repressor homolog (101 aa).

The DNA-binding element occupies 59–82 (QREIQQNLSTSAATITRGSNMLKM).

This sequence belongs to the TrpR family. In terms of assembly, homodimer.

The protein localises to the cytoplasm. Functionally, this protein is an aporepressor. When complexed with L-tryptophan it binds the operator region of the trp operon and prevents the initiation of transcription. In Actinobacillus succinogenes (strain ATCC 55618 / DSM 22257 / CCUG 43843 / 130Z), this protein is Trp operon repressor homolog.